The primary structure comprises 601 residues: Protein FREE1 (601 aa).

The interval 1-240 (MQQGDYNSYY…SGEYPAFEDS (240 aa)) is disordered. Pro residues predominate over residues 21 to 35 (TPNPNPNPNPSPPAP). Composition is skewed to polar residues over residues 63-79 (DYSNYSQNYTPYGQNSE) and 125-155 (LSSYGSFDSTAPYQQPTSQHMYYSPYDQHQT). Positions 161–175 (APPPSSAPAPNPNPA) are enriched in pro residues. Positions 176–197 (PYSSSLYSAPPYSSGGSSIPPS) are enriched in low complexity. A compositionally biased stretch (basic and acidic residues) spans 214-231 (NRSRSDLGSDLYGKRSDS). Ser-218 carries the post-translational modification Phosphoserine. Positions 338 to 344 (LDGLRML) are nuclear export signal. The segment at 455 to 515 (DEAVSKCTSC…VCDRCMAEVS (61 aa)) adopts an FYVE-type zinc-finger fold. Cys-461, Cys-464, Cys-477, Cys-480, Cys-485, Cys-488, Cys-507, and Cys-510 together coordinate Zn(2+). Positions 527 to 552 (RNVSLQSHEDLARKLQEEMERNRKSS) form a coiled coil. Phosphoserine is present on residues Ser-530 and Ser-533. Residues 542 to 561 (QEEMERNRKSSSGLREGSGR) form a disordered region.

In terms of assembly, part of the ESCRT-I complex. Interacts with VPS23A and VPS23B, but not with VPS28 or VPS37. Interacts with IRT1. Interacts with SH3P2. Interacts with SH3P3, but not with SH3P1. Interacts (via N-terminus) with PYL4 and PYR3. Interacts (via C-terminus) with SNRK2D/SNRK2.2, SNRK2I/SNRK2.3, ABF4 and ABI5. Interacts with SINAT1, SINAT2, SINAT3 and SINAT4. Interacts with SINAT5. Component of a phosphoinositide 3-kinase (PI3K) complex containing ATG6, SH3P2 and FREE1. In terms of processing, phosphorylated at Ser-530 and Ser-533 by SNRK2D/SNRK2.2 and SNRK2I/SNRK2.3 in response to abscisic acid (ABA). Phosphorylation is necessary for ABA-induced FREE1 nuclear import. Post-translationally, ubiquitinated by SINAT1, SINAT2, SINAT3 and SINAT4 for subsequent proteasomal degradation. Ubiquitous. Lowest expression in mature seeds.

Its subcellular location is the cytoplasm. It localises to the prevacuolar compartment membrane. It is found in the late endosome. The protein resides in the endosome. The protein localises to the multivesicular body. Its subcellular location is the nucleus. In terms of biological role, endosomal sorting complex required for transport (ESCRT) component regulating multivesicular body (MVB) protein sorting and plant growth. Required for the formation of intra-luminal vesicles (ILVs)in MVBs. Binds to phosphatidylinositol-3-phosphate (PI3P) and ubiquitin. Controls IRT1 recycling to the plasma membrane and impacts the polar delivery of this transporter to the outer plasma membrane domain. Regulates ubiquitin-dependent membrane protein degradation, vacuolar transport, autophagy, and vacuole biogenesis. ESCRT component that binds ubiquitin and regulates vacuolar sorting of proteins. Attenuates abscisic acid (ABA) signaling through RSL1-triggered degradation of the ABA receptors PYR1 and PYL4. Interacts with PYL4 and PYR1, and delivers the ubiquitinated ABA receptors as cargo to the vacuolar degradation pathway. In response to ABA, is phosphorylated by SnRK2 kinases which mediate FREE1 nuclear import. In the nucleus, interacts with the ABA-responsive transcription factors ABF4 and ABI5 to reduce their ability to bind to their cis-regulatory sequences of downstream genes, thus leading to transcriptional inhibition of ABA signaling pathway. Negatively regulates salt stress tolerance via a negative feedback loop involving ABA signaling pathway. In Arabidopsis thaliana (Mouse-ear cress), this protein is Protein FREE1.